The primary structure comprises 524 residues: Na(+)/H(+) antiporter NhaB (524 aa).

Helical transmembrane passes span Phe13–Pro33, Leu98–Phe118, Ala140–Val160, Phe239–Leu259, Ala304–Val324, Gly325–Gly345, Leu358–Ile378, Ala448–Ile468, and Ala479–Val499.

It belongs to the NhaB Na(+)/H(+) (TC 2.A.34) antiporter family.

It localises to the cell inner membrane. The enzyme catalyses 2 Na(+)(in) + 3 H(+)(out) = 2 Na(+)(out) + 3 H(+)(in). Na(+)/H(+) antiporter that extrudes sodium in exchange for external protons. This Yersinia pestis (strain Pestoides F) protein is Na(+)/H(+) antiporter NhaB.